We begin with the raw amino-acid sequence, 464 residues long: ATP synthase subunit beta (464 aa).

151-158 provides a ligand contact to ATP; that stretch reads GGAGVGKT.

Belongs to the ATPase alpha/beta chains family. In terms of assembly, F-type ATPases have 2 components, CF(1) - the catalytic core - and CF(0) - the membrane proton channel. CF(1) has five subunits: alpha(3), beta(3), gamma(1), delta(1), epsilon(1). CF(0) has three main subunits: a(1), b(2) and c(9-12). The alpha and beta chains form an alternating ring which encloses part of the gamma chain. CF(1) is attached to CF(0) by a central stalk formed by the gamma and epsilon chains, while a peripheral stalk is formed by the delta and b chains.

The protein resides in the cell membrane. The catalysed reaction is ATP + H2O + 4 H(+)(in) = ADP + phosphate + 5 H(+)(out). Functionally, produces ATP from ADP in the presence of a proton gradient across the membrane. The catalytic sites are hosted primarily by the beta subunits. This Bacillus cytotoxicus (strain DSM 22905 / CIP 110041 / 391-98 / NVH 391-98) protein is ATP synthase subunit beta.